Reading from the N-terminus, the 756-residue chain is MKFGKDFSSEWQQAYVDYKYLKTLVKDINRFKRKTNLHGGQISLSSTVLEIEDGITTATIQVSSTASQRYETTFLMTAEKGGEYELVFFRRLDDEFNKVEKFYREKVDEVVKEAAVLNKQMDALIAFRLKMKEESTVEMARFALHGVVSPAELAKNPSMKVHMEAIEEGGSSRAGRRSDEDDYYTDEEDHNDVFFTPANNLSKMKSSSSAFIEVLDSIKINNTKEALQSNTKSVLKVSNHTELKFSRDNLRKIEEKLICAFVEFHRKLWYLKSYSFLNVLALSKILTKYDKITSRDAAKSYMKMVDKSCLGSSDEVMKLMENVEATFIKQFTNGNRTKGMNILRPKPKRERHRLTFSTGFLGGCMFSLIVALVAIVRTRNILQDDGQKQYMNTMFPLYSLFGFIMLHMTMYAANIYFWRQYRVNYSFIFGFKQGTELGYKQVLFVGFSIGALALLCVLANLDMETDPKTKDYQALTELLPLFLLIAMFVVLVVPFNIFYRSSRFFFLTTLFHMLAAPLYKVTLPDFFLADQLCSQAQTLRSIEFYICYYGWGDFKQRKNTCKDSQVFNTFLFIVSAFPFFSRFLQCMRRMLEEKNIEQGYNGFKYIVIVVAVCLGMAYEVDDEKDRQIIWRLLGGITSAMAVVFCTYWDLVYDWGLLNRTSKNPWLRDNLLIPHKEVYVLAMILNVVLRFAWMQTVLDFKFESIHTQTVVAVVASLEIIRRGIWNFFRLENEHLNNVGKYRAFKAVSLPFNYEVDH.

An SPX domain is found at 1 to 303 (MKFGKDFSSE…SRDAAKSYMK (303 aa)). Residues 1-355 (MKFGKDFSSE…KPKRERHRLT (355 aa)) are Cytoplasmic-facing. A helical membrane pass occupies residues 356–376 (FSTGFLGGCMFSLIVALVAIV). The Extracellular portion of the chain corresponds to 377-396 (RTRNILQDDGQKQYMNTMFP). A helical membrane pass occupies residues 397-417 (LYSLFGFIMLHMTMYAANIYF). Over 418 to 440 (WRQYRVNYSFIFGFKQGTELGYK) the chain is Cytoplasmic. A helical transmembrane segment spans residues 441 to 461 (QVLFVGFSIGALALLCVLANL). The Extracellular portion of the chain corresponds to 462–477 (DMETDPKTKDYQALTE). A helical transmembrane segment spans residues 478-498 (LLPLFLLIAMFVVLVVPFNIF). Topologically, residues 499–631 (YRSSRFFFLT…DEKDRQIIWR (133 aa)) are cytoplasmic. The region spanning 562–756 (KDSQVFNTFL…SLPFNYEVDH (195 aa)) is the EXS domain. Residues 632-652 (LLGGITSAMAVVFCTYWDLVY) traverse the membrane as a helical segment. Residues 653-676 (DWGLLNRTSKNPWLRDNLLIPHKE) are Extracellular-facing. A helical membrane pass occupies residues 677–697 (VYVLAMILNVVLRFAWMQTVL). The Cytoplasmic segment spans residues 698 to 756 (DFKFESIHTQTVVAVVASLEIIRRGIWNFFRLENEHLNNVGKYRAFKAVSLPFNYEVDH).

The protein belongs to the SYG1 (TC 2.A.94) family. As to expression, specifically expressed in anther connective tissue.

It localises to the cell membrane. Its function is as follows. May transport inorganic phosphate (Pi). The chain is Phosphate transporter PHO1 homolog 6 (PHO1-H6) from Arabidopsis thaliana (Mouse-ear cress).